We begin with the raw amino-acid sequence, 171 residues long: Adenine phosphoribosyltransferase (171 aa).

The protein belongs to the purine/pyrimidine phosphoribosyltransferase family. Homodimer.

The protein localises to the cytoplasm. It carries out the reaction AMP + diphosphate = 5-phospho-alpha-D-ribose 1-diphosphate + adenine. Its pathway is purine metabolism; AMP biosynthesis via salvage pathway; AMP from adenine: step 1/1. Functionally, catalyzes a salvage reaction resulting in the formation of AMP, that is energically less costly than de novo synthesis. The chain is Adenine phosphoribosyltransferase from Rhodospirillum rubrum (strain ATCC 11170 / ATH 1.1.1 / DSM 467 / LMG 4362 / NCIMB 8255 / S1).